The chain runs to 450 residues: Glucose-6-phosphate isomerase (450 aa).

Threonine 39 is modified (phosphothreonine). Glutamate 291 serves as the catalytic Proton donor. Active-site residues include histidine 312 and lysine 426.

It belongs to the GPI family.

Its subcellular location is the cytoplasm. It carries out the reaction alpha-D-glucose 6-phosphate = beta-D-fructose 6-phosphate. It participates in carbohydrate biosynthesis; gluconeogenesis. Its pathway is carbohydrate degradation; glycolysis; D-glyceraldehyde 3-phosphate and glycerone phosphate from D-glucose: step 2/4. Functionally, catalyzes the reversible isomerization of glucose-6-phosphate to fructose-6-phosphate. This is Glucose-6-phosphate isomerase from Bacillus cereus (strain G9842).